The sequence spans 342 residues: Cytochrome c oxidase subunit 2 (342 aa).

The signal sequence occupies residues 1-22 (MKLWKTASRFLPLSFLTLFLTG). Residue C23 is the site of N-palmitoyl cysteine attachment. C23 carries S-diacylglycerol cysteine lipidation. Residues 23–50 (CLGEENLTALDPKGPQAQWIYDNMILSI) lie on the Extracellular side of the membrane. Positions 23-249 (CLGEENLTAL…MSAEVEEPTE (227 aa)) are cytochrome c oxidase subunit II. Residues 51-69 (IVMALVSIVVFAIFFIILA) form a helical membrane-spanning segment. The Cytoplasmic portion of the chain corresponds to 70-89 (KYRRKPGDDEIPKQVHGNTA). Residues 90 to 108 (LEITWTVIPIILLVILAVP) traverse the membrane as a helical segment. At 109 to 342 (TITGTFMFAD…AYLRSLKVME (234 aa)) the chain is on the extracellular side. Cu cation is bound by residues H175, C210, C214, and H218. One can recognise a Cytochrome c domain in the interval 250–342 (TLANQGRQVF…AYLRSLKVME (93 aa)). 4 residues coordinate heme c: C264, C267, H268, and M317.

The protein belongs to the cytochrome c oxidase subunit 2 family. Requires Cu cation as cofactor. Heme c serves as cofactor.

It localises to the cell membrane. It carries out the reaction 4 Fe(II)-[cytochrome c] + O2 + 8 H(+)(in) = 4 Fe(III)-[cytochrome c] + 2 H2O + 4 H(+)(out). Functionally, subunits I and II form the functional core of the enzyme complex. Electrons originating in cytochrome c are transferred via heme a and Cu(A) to the binuclear center formed by heme a3 and Cu(B). The chain is Cytochrome c oxidase subunit 2 (ctaC) from Alkalihalophilus pseudofirmus (strain ATCC BAA-2126 / JCM 17055 / OF4) (Bacillus pseudofirmus).